The following is a 767-amino-acid chain: uncharacterized protein (767 aa).

Disordered regions lie at residues 171–209 (LPVW…LRTP), 314–340 (ETEA…CQEE), and 533–566 (RDHG…PRGF). 2 stretches are compositionally biased toward basic and acidic residues: residues 322–331 (PDPRPEKDAK) and 552–564 (ETKD…RDPR).

This is an uncharacterized protein from Homo sapiens (Human).